We begin with the raw amino-acid sequence, 339 residues long: DNA-directed RNA polymerase subunit alpha (339 aa).

Residues 1-233 form an alpha N-terminal domain (alpha-NTD) region; the sequence is MVREEVAGST…DLFLPFLHAE (233 aa). Residues 264 to 339 form an alpha C-terminal domain (alpha-CTD) region; the sequence is KKGIPLNCIF…IDLLKNKLSF (76 aa).

It belongs to the RNA polymerase alpha chain family. In terms of assembly, in plastids the minimal PEP RNA polymerase catalytic core is composed of four subunits: alpha, beta, beta', and beta''. When a (nuclear-encoded) sigma factor is associated with the core the holoenzyme is formed, which can initiate transcription.

The protein resides in the plastid. It is found in the chloroplast. The catalysed reaction is RNA(n) + a ribonucleoside 5'-triphosphate = RNA(n+1) + diphosphate. Its function is as follows. DNA-dependent RNA polymerase catalyzes the transcription of DNA into RNA using the four ribonucleoside triphosphates as substrates. The chain is DNA-directed RNA polymerase subunit alpha from Heteranthelium piliferum (Elymus pilifer).